The primary structure comprises 377 residues: MSFMEALKDLRSEIDSLDRELIQLFAKRLELVSQVGKVKHQHGLPIYAPEREIAMLQARRLEAEKAGISADLIEDVLRRFMRESYANENQFGFKTINSDIHKIVIVGGYGKLGGLFARYLRASGYPISILDREDWAVAESILANADVVIVSVPINLTLETIERLKPYLTENMLLADLTSVKREPLAKMLEVHTGAVLGLHPMFGADIASMAKQVVVRCDGRFPERYEWLLEQIQIWGAKIYQTNATEHDHNMTYIQALRHFSTFANGLHLSKQPINLANLLALSSPIYRLELAMIGRLFAQDAELYADIIMDKSENLAVIETLKQTYDEALTFFENNDRQGFIDAFHKVRDWFGDYSEQFLKESRQLLQQANDLKQG.

The region spanning Met1–Gly92 is the Chorismate mutase domain. Positions His101–Ser364 constitute a Prephenate/arogenate dehydrogenase domain.

This sequence in the C-terminal section; belongs to the prephenate/arogenate dehydrogenase family.

Its subcellular location is the cytoplasm. The catalysed reaction is chorismate = prephenate. It catalyses the reaction prephenate + NAD(+) = 3-(4-hydroxyphenyl)pyruvate + CO2 + NADH. It functions in the pathway amino-acid biosynthesis; L-tyrosine biosynthesis; (4-hydroxyphenyl)pyruvate from prephenate (NAD(+) route): step 1/1. The protein operates within metabolic intermediate biosynthesis; prephenate biosynthesis; prephenate from chorismate: step 1/1. The sequence is that of T-protein (tyrA) from Haemophilus influenzae (strain ATCC 51907 / DSM 11121 / KW20 / Rd).